Consider the following 122-residue polypeptide: MKTQKQYLGAFGEDVALQQYLDDQATLLDRNVRYSCGELDLIVRSASGVVVFVEVKTRRGSAFDSAAAVNNQKMLRMRRAAALWLEGKPYTPIRFDVVAIVLDPHTGRPEITVYEDVEHGAR.

This sequence belongs to the UPF0102 family.

This chain is UPF0102 protein Cgl2031/cg2228, found in Corynebacterium glutamicum (strain ATCC 13032 / DSM 20300 / JCM 1318 / BCRC 11384 / CCUG 27702 / LMG 3730 / NBRC 12168 / NCIMB 10025 / NRRL B-2784 / 534).